The chain runs to 272 residues: Phosphoglycolate phosphatase (272 aa).

Catalysis depends on Asp-19, which acts as the Nucleophile. Mg(2+) is bound by residues Asp-19, Asp-21, and Asp-182.

It belongs to the HAD-like hydrolase superfamily. CbbY/CbbZ/Gph/YieH family. It depends on Mg(2+) as a cofactor.

It carries out the reaction 2-phosphoglycolate + H2O = glycolate + phosphate. Its pathway is organic acid metabolism; glycolate biosynthesis; glycolate from 2-phosphoglycolate: step 1/1. Specifically catalyzes the dephosphorylation of 2-phosphoglycolate. Is involved in the dissimilation of the intracellular 2-phosphoglycolate formed during the DNA repair of 3'-phosphoglycolate ends, a major class of DNA lesions induced by oxidative stress. This chain is Phosphoglycolate phosphatase, found in Pseudomonas putida (strain ATCC 47054 / DSM 6125 / CFBP 8728 / NCIMB 11950 / KT2440).